Consider the following 148-residue polypeptide: Endoribonuclease YbeY (148 aa).

Zn(2+) is bound by residues histidine 112, histidine 116, and histidine 122.

It belongs to the endoribonuclease YbeY family. Zn(2+) is required as a cofactor.

The protein localises to the cytoplasm. In terms of biological role, single strand-specific metallo-endoribonuclease involved in late-stage 70S ribosome quality control and in maturation of the 3' terminus of the 16S rRNA. The protein is Endoribonuclease YbeY of Albidiferax ferrireducens (strain ATCC BAA-621 / DSM 15236 / T118) (Rhodoferax ferrireducens).